A 1187-amino-acid polypeptide reads, in one-letter code: BAI1-associated protein 3 (1187 aa).

The segment at 55 to 81 (SFRRRTEQDPGSASADPQEPATGAWKP) is disordered. The C2 1 domain occupies 176 to 335 (SLEEHTEAIE…VKSARANGTA (160 aa)). Ca(2+)-binding residues include Asp-211, Asp-217, Asp-295, and Asp-297. The region spanning 663–784 (FELYLTLADL…EATLFYTELL (122 aa)) is the MHD1 domain. An MHD2 domain is found at 888–996 (DEAVAPLMKY…CSTRECIEQF (109 aa)). Residues 1010-1136 (RFGRLSVRCH…GVARPQVGGG (127 aa)) form the C2 2 domain. Positions 1040, 1041, 1047, 1105, 1107, 1110, and 1113 each coordinate Ca(2+).

The protein belongs to the unc-13 family. In terms of assembly, interacts with ADGRB1; this interaction is direct. Interacts with endosomal SNARE proteins VAMP3, VAMP4, STX6 and STX16; this interaction is increased in the presence of calcium. It depends on Ca(2+) as a cofactor. Predominantly expressed in brain. Also expressed in nonneural tissues such as breast and testes epithelium.

It localises to the cytoplasm. The protein localises to the cytosol. The protein resides in the recycling endosome membrane. Its subcellular location is the late endosome membrane. It is found in the golgi apparatus. It localises to the trans-Golgi network membrane. The protein localises to the cell membrane. Functionally, functions in endosome to Golgi retrograde transport. In response to calcium influx, may interact with SNARE fusion receptors and membrane phospholipids to mediate endosome fusion with the trans-Golgi network. By promoting the recycling of secretory vesicle transmembrane proteins, it indirectly controls dense-core secretory vesicle biogenesis, maturation and their ability to mediate the constitutive and regulated secretion of neurotransmitters and hormones. May regulate behavior and food intake by controlling calcium-stimulated exocytosis of neurotransmitters including NPY and serotonin and hormones like insulin. Proposed to play a role in hypothalamic neuronal firing by modulating gamma-aminobutyric acid (GABA)ergic inhibitory neurotransmission. In Homo sapiens (Human), this protein is BAI1-associated protein 3.